Reading from the N-terminus, the 1050-residue chain is ATP-dependent DNA helicase MPH1 (1050 aa).

In terms of domain architecture, Helicase ATP-binding spans 95–262; sequence IVQRAFYHNL…EIIDNLNISK (168 aa). Residue 108 to 115 coordinates ATP; it reads LPTGLGKT. Residues 210 to 213 carry the DEAH box motif; that stretch reads DEAH. Residues 431–631 enclose the Helicase C-terminal domain; it reads KIEAMMEELD…LIDLKEQNRM (201 aa). Disordered regions lie at residues 493-524 and 743-821; these read DESN…AQIN and DSDE…PPKR. Residues 499–508 show a composition bias toward basic residues; sequence KKSKGKRVGK. Residues 786-799 show a composition bias toward basic and acidic residues; sequence RTLDQHHSASEERG. Polar residues predominate over residues 800-810; it reads INSNFSHESNL.

It belongs to the DEAD box helicase family. DEAH subfamily. FANCM sub-subfamily. Interacts with the MHF histone-fold complex to form the FANCM-MHF complex.

It is found in the nucleus. It carries out the reaction ATP + H2O = ADP + phosphate + H(+). Its function is as follows. ATP-dependent DNA helicase involved in DNA damage repair by homologous recombination and in genome maintenance. Capable of unwinding D-loops. Plays a role in limiting crossover recombinants during mitotic DNA double-strand break (DSB) repair. Component of a FANCM-MHF complex which promotes gene conversion at blocked replication forks, probably by reversal of the stalled fork. This chain is ATP-dependent DNA helicase MPH1, found in Scheffersomyces stipitis (strain ATCC 58785 / CBS 6054 / NBRC 10063 / NRRL Y-11545) (Yeast).